Consider the following 402-residue polypeptide: Speedy protein E2B (402 aa).

The segment at 1-89 (MDRTETRFRK…EEPEKELAPE (89 aa)) is disordered. Positions 16-39 (GKITTSRQPHPQNEQSPQRSTSGY) are enriched in polar residues. Over residues 76–89 (DESEEEPEKELAPE) the composition is skewed to acidic residues.

It belongs to the Speedy/Ringo family.

This chain is Speedy protein E2B (SPDYE2B), found in Homo sapiens (Human).